The sequence spans 126 residues: 5-hydroxyisourate hydrolase (126 aa).

Residues His-16, Arg-54, and Tyr-123 each contribute to the substrate site.

Belongs to the transthyretin family. 5-hydroxyisourate hydrolase subfamily. As to quaternary structure, homotetramer.

It catalyses the reaction 5-hydroxyisourate + H2O = 5-hydroxy-2-oxo-4-ureido-2,5-dihydro-1H-imidazole-5-carboxylate + H(+). In terms of biological role, catalyzes the hydrolysis of 5-hydroxyisourate (HIU) to 2-oxo-4-hydroxy-4-carboxy-5-ureidoimidazoline (OHCU). This is 5-hydroxyisourate hydrolase from Pseudomonas aeruginosa (strain ATCC 15692 / DSM 22644 / CIP 104116 / JCM 14847 / LMG 12228 / 1C / PRS 101 / PAO1).